Reading from the N-terminus, the 292-residue chain is Polyketide transferase af380 (292 aa).

Residues 46–267 are abhydrolase domain; it reads DVAVWFQQQG…FDLVAGRGHM (222 aa).

This sequence belongs to the polyketide transferase af380 family.

The enzyme catalyses fumagillol + dodecapentaneoyl-[polyketide synthase] = prefumagillin + holo-[polyketide synthase]. It participates in secondary metabolite biosynthesis; terpenoid biosynthesis. Its function is as follows. Polyketide transferase; part of the gene cluster that mediates the biosynthesis of fumagillin, a meroterpenoid that has numerous biological activities including irreversible inhibition of human type 2 methionine aminopeptidase (METAP2). Within the pathway, the polyketide transferase af380 catalyzes the transfer of a dodecapentaenoyl group synthesized by the polyketide synthase af370 onto 5R-hydroxy-seco-sesquiterpene to produce prefumagillin. The pathway begins with the conversion of farnesyl pyrophosphate (FPP) to beta-trans-bergamotene by the membrane-bound beta-trans-bergamotene synthase af520. The multifunctional cytochrome P450 monooxygenase af510 then converts beta-trans-bergamotene into 5-keto-demethoxyfumagillol via several oxydation steps. 5-keto-demethoxyfumagillol is then subjected to successive C-6 hydroxylation and O-methylation by the dioxygenase af480 and O-methyltransferase af390-400, respectively, to yield 5-keto-fumagillol, which is then stereoselectively reduced by the keto-reductase af490 to 5R-hydroxy-seco-sesquiterpene. The next step is the polyketide transferase af380-catalyzed transfer of a dodecapentaenoyl group synthesized by the polyketide synthase af370 onto 5R-hydroxy-seco-sesquiterpene which leads to the production of prefumagillin. Finally, oxidative cleavage by the monooxygenase af470 converts prefumagillin to fumagillin. The sequence is that of Polyketide transferase af380 from Aspergillus fumigatus (strain ATCC MYA-4609 / CBS 101355 / FGSC A1100 / Af293) (Neosartorya fumigata).